The following is a 393-amino-acid chain: S-adenosylmethionine synthase (393 aa).

Glu9 serves as a coordination point for Mg(2+). His15 contacts ATP. K(+) is bound at residue Glu43. The L-methionine site is built by Glu56 and Gln99. Residues 167-169 (HGK), 235-238 (SGRF), Asp246, 252-253 (RK), Ala269, Lys273, and Lys277 contribute to the ATP site. Residue Asp246 participates in L-methionine binding. An L-methionine-binding site is contributed by Lys277.

This sequence belongs to the AdoMet synthase family. As to quaternary structure, homotetramer. Mn(2+) is required as a cofactor. The cofactor is Mg(2+). Co(2+) serves as cofactor. It depends on K(+) as a cofactor. In terms of tissue distribution, root.

The protein resides in the cytoplasm. It catalyses the reaction L-methionine + ATP + H2O = S-adenosyl-L-methionine + phosphate + diphosphate. The protein operates within amino-acid biosynthesis; S-adenosyl-L-methionine biosynthesis; S-adenosyl-L-methionine from L-methionine: step 1/1. Catalyzes the formation of S-adenosylmethionine from methionine and ATP. The reaction comprises two steps that are both catalyzed by the same enzyme: formation of S-adenosylmethionine (AdoMet) and triphosphate, and subsequent hydrolysis of the triphosphate. The chain is S-adenosylmethionine synthase (METK) from Pinus banksiana (Jack pine).